The sequence spans 126 residues: MARLVGVDLPRDKRLEVALTYIYGVGRTRAADTLKATGISPDLRVKDLGDAEIVALRDHLEGNYKIEGDLRREVAADIRRKVEIGSYEGLRHRRGLPVRGQRTKTNARTRKGPKRTVAGKKKAGRK.

The interval 93–126 is disordered; the sequence is RRGLPVRGQRTKTNARTRKGPKRTVAGKKKAGRK.

It belongs to the universal ribosomal protein uS13 family. Part of the 30S ribosomal subunit. Forms a loose heterodimer with protein S19. Forms two bridges to the 50S subunit in the 70S ribosome.

Located at the top of the head of the 30S subunit, it contacts several helices of the 16S rRNA. In the 70S ribosome it contacts the 23S rRNA (bridge B1a) and protein L5 of the 50S subunit (bridge B1b), connecting the 2 subunits; these bridges are implicated in subunit movement. Contacts the tRNAs in the A and P-sites. The chain is Small ribosomal subunit protein uS13 from Beutenbergia cavernae (strain ATCC BAA-8 / DSM 12333 / CCUG 43141 / JCM 11478 / NBRC 16432 / NCIMB 13614 / HKI 0122).